The primary structure comprises 370 residues: Anhydro-N-acetylmuramic acid kinase (370 aa).

12 to 19 (GTSLDGVD) contributes to the ATP binding site.

This sequence belongs to the anhydro-N-acetylmuramic acid kinase family.

The catalysed reaction is 1,6-anhydro-N-acetyl-beta-muramate + ATP + H2O = N-acetyl-D-muramate 6-phosphate + ADP + H(+). It participates in amino-sugar metabolism; 1,6-anhydro-N-acetylmuramate degradation. It functions in the pathway cell wall biogenesis; peptidoglycan recycling. Catalyzes the specific phosphorylation of 1,6-anhydro-N-acetylmuramic acid (anhMurNAc) with the simultaneous cleavage of the 1,6-anhydro ring, generating MurNAc-6-P. Is required for the utilization of anhMurNAc either imported from the medium or derived from its own cell wall murein, and thus plays a role in cell wall recycling. The protein is Anhydro-N-acetylmuramic acid kinase of Pectobacterium atrosepticum (strain SCRI 1043 / ATCC BAA-672) (Erwinia carotovora subsp. atroseptica).